A 290-amino-acid chain; its full sequence is 33 kDa chaperonin (290 aa).

2 disulfides stabilise this stretch: Cys-235–Cys-237 and Cys-268–Cys-271.

It belongs to the HSP33 family. Post-translationally, under oxidizing conditions two disulfide bonds are formed involving the reactive cysteines. Under reducing conditions zinc is bound to the reactive cysteines and the protein is inactive.

The protein localises to the cytoplasm. Its function is as follows. Redox regulated molecular chaperone. Protects both thermally unfolding and oxidatively damaged proteins from irreversible aggregation. Plays an important role in the bacterial defense system toward oxidative stress. The chain is 33 kDa chaperonin from Streptococcus gordonii (strain Challis / ATCC 35105 / BCRC 15272 / CH1 / DL1 / V288).